We begin with the raw amino-acid sequence, 143 residues long: Large ribosomal subunit protein uL11 (143 aa).

It belongs to the universal ribosomal protein uL11 family. In terms of assembly, part of the ribosomal stalk of the 50S ribosomal subunit. Interacts with L10 and the large rRNA to form the base of the stalk. L10 forms an elongated spine to which L12 dimers bind in a sequential fashion forming a multimeric L10(L12)X complex. In terms of processing, one or more lysine residues are methylated.

Forms part of the ribosomal stalk which helps the ribosome interact with GTP-bound translation factors. This is Large ribosomal subunit protein uL11 from Pseudomonas fluorescens (strain SBW25).